The following is a 314-amino-acid chain: MSRPRRRGRDINGVLLLDKPQGMSSNDALQKVKRIYNANRAGHTGALDPLATGMLPICLGEATKFSQYLLDSDKLYRVIARLGQRTDTSDADGQIVEERPVTFSAEQLAAALDTFRGDIEQIPSMYSALKYQGKKLYEYARQGIEVPREARPITVYELLFIRHEGNELELEIHCSKGTYIRTIIDDLGEKLGCGAHVIYLRRLAVSKYPVERMVTLEHLRELVEQAEQQDIPAAELLDPLLMPMDSPASDYPVVNLPLTSSVYFKNGNPVRTSGAPLEGLVRVTEGENGKFIGMGEIDDEGRVAPRRLVVEYPA.

His43 serves as a coordination point for substrate. The active-site Nucleophile is the Asp48. Substrate-binding residues include Tyr76, Tyr179, and Leu200.

Belongs to the pseudouridine synthase TruB family. Type 1 subfamily.

The enzyme catalyses uridine(55) in tRNA = pseudouridine(55) in tRNA. Responsible for synthesis of pseudouridine from uracil-55 in the psi GC loop of transfer RNAs. The protein is tRNA pseudouridine synthase B of Shigella dysenteriae serotype 1 (strain Sd197).